Consider the following 240-residue polypeptide: MSSLTFFIFCLQLFIFTSTVSGISIKRCTEEENNTWEIEVGLCIQTENFRAIKTGCYKIQGPGGLLTEGNGFKIFAHDDCSKEKTQNNFILDSVNEAVYALGKYVYMEISTSNITTLNSLPQCAKRISLSISCDQVTTEMKSYVESVSFKDYDLEFVITTDISCVKHVSSSVIVRNECEKKYISTGKKIFGFNNKIDCSAVKFSEHVNYLKTCSVGKFDRKKYYEHQHNYIKKIFHHNEL.

This sequence belongs to the poxviruses B9 family.

The sequence is that of T4 protein from Sheeppox virus (strain InS-1) (SPPV).